The chain runs to 102 residues: Putative pterin-4-alpha-carbinolamine dehydratase (102 aa).

This sequence belongs to the pterin-4-alpha-carbinolamine dehydratase family.

The enzyme catalyses (4aS,6R)-4a-hydroxy-L-erythro-5,6,7,8-tetrahydrobiopterin = (6R)-L-erythro-6,7-dihydrobiopterin + H2O. The chain is Putative pterin-4-alpha-carbinolamine dehydratase from Burkholderia vietnamiensis (strain G4 / LMG 22486) (Burkholderia cepacia (strain R1808)).